A 497-amino-acid polypeptide reads, in one-letter code: L-asparagine permease (497 aa).

The next 12 helical transmembrane spans lie at 34 to 54, 58 to 78, 109 to 129, 146 to 166, 171 to 191, 219 to 239, 264 to 284, 298 to 318, 353 to 373, 378 to 398, 422 to 442, and 448 to 468; these read QVQM…GAGA, MAGP…FFIL, VAGW…ITAV, VFAL…VKWF, FWFA…GTIF, LLPA…IELV, IGLF…WNAY, LGVP…ALSS, YAGI…NYLV, FEIV…FIMV, APFT…LMAF, and TYTI…WFGV.

It belongs to the amino acid-polyamine-organocation (APC) superfamily. Amino acid transporter (AAT) (TC 2.A.3.1) family.

The protein resides in the cell inner membrane. The sequence is that of L-asparagine permease (ansP) from Salmonella typhimurium (strain LT2 / SGSC1412 / ATCC 700720).